The primary structure comprises 730 residues: DNA ligase (730 aa).

Positions 1–23 (MAGEQHAQPTSVPAEAREKHAQL) are disordered. NAD(+) contacts are provided by residues 44-48 (DAEFD), 93-94 (SL), and Glu-124. The active-site N6-AMP-lysine intermediate is Lys-126. NAD(+)-binding residues include Arg-147, Glu-184, Lys-300, and Lys-324. 4 residues coordinate Zn(2+): Cys-418, Cys-421, Cys-437, and Cys-443. The region spanning 638 to 727 (EGPRPLEGLT…PEAAAEVALP (90 aa)) is the BRCT domain.

This sequence belongs to the NAD-dependent DNA ligase family. LigA subfamily. It depends on Mg(2+) as a cofactor. Mn(2+) is required as a cofactor.

The catalysed reaction is NAD(+) + (deoxyribonucleotide)n-3'-hydroxyl + 5'-phospho-(deoxyribonucleotide)m = (deoxyribonucleotide)n+m + AMP + beta-nicotinamide D-nucleotide.. Functionally, DNA ligase that catalyzes the formation of phosphodiester linkages between 5'-phosphoryl and 3'-hydroxyl groups in double-stranded DNA using NAD as a coenzyme and as the energy source for the reaction. It is essential for DNA replication and repair of damaged DNA. This chain is DNA ligase, found in Streptomyces avermitilis (strain ATCC 31267 / DSM 46492 / JCM 5070 / NBRC 14893 / NCIMB 12804 / NRRL 8165 / MA-4680).